A 561-amino-acid polypeptide reads, in one-letter code: Urocanate hydratase (561 aa).

Residues 52–53 (GG), Gln-130, 176–178 (GMG), Glu-196, Arg-201, 242–243 (NA), 263–267 (QTSAH), 273–274 (YL), and Tyr-322 each bind NAD(+). Cys-410 is a catalytic residue. NAD(+) is bound at residue Gly-492.

This sequence belongs to the urocanase family. Requires NAD(+) as cofactor.

The protein resides in the cytoplasm. The catalysed reaction is 4-imidazolone-5-propanoate = trans-urocanate + H2O. The protein operates within amino-acid degradation; L-histidine degradation into L-glutamate; N-formimidoyl-L-glutamate from L-histidine: step 2/3. Catalyzes the conversion of urocanate to 4-imidazolone-5-propionate. The polypeptide is Urocanate hydratase (Salmonella agona (strain SL483)).